Here is a 141-residue protein sequence, read N- to C-terminus: Putative pre-16S rRNA nuclease (141 aa).

Belongs to the YqgF nuclease family.

The protein resides in the cytoplasm. Could be a nuclease involved in processing of the 5'-end of pre-16S rRNA. This is Putative pre-16S rRNA nuclease from Coxiella burnetii (strain RSA 331 / Henzerling II).